The primary structure comprises 751 residues: Myb-related protein A (751 aa).

A disordered region spans residues 1–22 (MAKRSRSEDEDDDLQYADHDYE). 3 consecutive HTH myb-type domains span residues 30-81 (KKLW…QKVL), 82-137 (NPEL…NPEV), and 138-188 (KKSS…RRKV). 3 DNA-binding regions (H-T-H motif) span residues 58–81 (WTLI…QKVL), 110–133 (WSLI…HNHL), and 161–184 (WAEI…NSTM). Lys199 is covalently cross-linked (Glycyl lysine isopeptide (Lys-Gly) (interchain with G-Cter in SUMO2)). The tract at residues 230-294 (IPGYQYVSPD…RLPPQPGSFS (65 aa)) is transcriptional activation domain. Positions 297–552 (SGSFLMDDSM…IRRSILGTTP (256 aa)) are negative regulatory domain. Lys393 carries the N6-acetyllysine modification. Glycyl lysine isopeptide (Lys-Gly) (interchain with G-Cter in SUMO2) cross-links involve residues Lys591 and Lys601.

In terms of assembly, component of the DREAM complex (also named LINC complex) at least composed of E2F4, E2F5, LIN9, LIN37, LIN52, LIN54, MYBL1, MYBL2, RBL1, RBL2, RBBP4, TFDP1 and TFDP2. The complex exists in quiescent cells where it represses cell cycle-dependent genes. It dissociates in S phase when LIN9, LIN37, LIN52 and LIN54 form a subcomplex that binds to MYBL2. As to expression, predominantly in the testis. Very low levels in the ovaries, spleen and brain.

The protein resides in the nucleus. In terms of biological role, transcription factor that specifically recognizes the sequence 5'-YAAC[GT]G-3'. Acts as a master regulator of male meiosis by promoting expression of piRNAs: activates expression of both piRNA precursor RNAs and expression of protein-coding genes involved in piRNA metabolism, such as PIWIL1. The piRNA metabolic process mediates the repression of transposable elements during meiosis by forming complexes composed of piRNAs and Piwi proteins and governs the methylation and subsequent repression of transposons, which is essential for the germline integrity. Transcriptional activator of SOX30. The sequence is that of Myb-related protein A (Mybl1) from Mus musculus (Mouse).